The sequence spans 73 residues: MTLFSSLSSLSTGSLKSSVSSIETGSSSGSFGSNETSGWGSHHWNSCHPCPPPRPICRPCPPCRPEPRCHYKY.

The first 21 residues, 1–21 (MTLFSSLSSLSTGSLKSSVSS), serve as a signal peptide directing secretion. Positions 1–38 (MTLFSSLSSLSTGSLKSSVSSIETGSSSGSFGSNETSG) are enriched in low complexity. The segment at 1–43 (MTLFSSLSSLSTGSLKSSVSSIETGSSSGSFGSNETSGWGSHH) is disordered. Residue Asn-34 is glycosylated (N-linked (GlcNAc...) asparagine).

Its subcellular location is the secreted. This is an uncharacterized protein from Dictyostelium discoideum (Social amoeba).